We begin with the raw amino-acid sequence, 445 residues long: Tubulin beta-3 chain (445 aa).

GTP is bound by residues glutamine 11, glutamate 69, serine 138, glycine 142, threonine 143, glycine 144, asparagine 204, and asparagine 226. A Mg(2+)-binding site is contributed by glutamate 69. The tract at residues 421–445 is disordered; it reads EYQQYQDATADEEEEYDEEEEEEAA. Acidic residues predominate over residues 429–445; it reads TADEEEEYDEEEEEEAA.

This sequence belongs to the tubulin family. In terms of assembly, dimer of alpha and beta chains. A typical microtubule is a hollow water-filled tube with an outer diameter of 25 nm and an inner diameter of 15 nM. Alpha-beta heterodimers associate head-to-tail to form protofilaments running lengthwise along the microtubule wall with the beta-tubulin subunit facing the microtubule plus end conferring a structural polarity. Microtubules usually have 13 protofilaments but different protofilament numbers can be found in some organisms and specialized cells. Mg(2+) serves as cofactor.

It is found in the cytoplasm. The protein resides in the cytoskeleton. Tubulin is the major constituent of microtubules, a cylinder consisting of laterally associated linear protofilaments composed of alpha- and beta-tubulin heterodimers. Microtubules grow by the addition of GTP-tubulin dimers to the microtubule end, where a stabilizing cap forms. Below the cap, tubulin dimers are in GDP-bound state, owing to GTPase activity of alpha-tubulin. The chain is Tubulin beta-3 chain (TUBB3) from Triticum aestivum (Wheat).